The sequence spans 454 residues: Glutamyl-tRNA reductase (454 aa).

Residues 50–53, Ser103, 108–110, and Gln114 contribute to the substrate site; these read TCNR and EDQ. Cys51 serves as the catalytic Nucleophile. NADP(+) is bound at residue 182–187; it reads GAGEMG. The segment at 407–454 is disordered; it reads LFDPNFGGDTPQPDRPDDIPRAAERGDISGDDLPDDVPNHIAEKVSDG. 2 stretches are compositionally biased toward basic and acidic residues: residues 418-434 and 443-454; these read QPDRPDDIPRAAERGDI and VPNHIAEKVSDG.

Belongs to the glutamyl-tRNA reductase family. As to quaternary structure, homodimer.

It catalyses the reaction (S)-4-amino-5-oxopentanoate + tRNA(Glu) + NADP(+) = L-glutamyl-tRNA(Glu) + NADPH + H(+). The protein operates within porphyrin-containing compound metabolism; protoporphyrin-IX biosynthesis; 5-aminolevulinate from L-glutamyl-tRNA(Glu): step 1/2. Its function is as follows. Catalyzes the NADPH-dependent reduction of glutamyl-tRNA(Glu) to glutamate 1-semialdehyde (GSA). This Haloquadratum walsbyi (strain DSM 16790 / HBSQ001) protein is Glutamyl-tRNA reductase.